The chain runs to 119 residues: Photosystem II extrinsic protein V (119 aa).

Positions 36, 39, and 40 each coordinate heme c.

Belongs to the cytochrome c family. PsbV subfamily. As to quaternary structure, PSII is composed of 1 copy each of membrane proteins PsbA, PsbB, PsbC, PsbD, PsbE, PsbF, PsbH, PsbI, PsbJ, PsbK, PsbL, PsbM, PsbT, PsbX, PsbY, PsbZ, Psb30/Ycf12, peripheral proteins PsbO, CyanoQ (PsbQ), PsbU, PsbV and a large number of cofactors. It forms dimeric complexes. The cofactor is heme c.

Its subcellular location is the cellular thylakoid membrane. Its function is as follows. One of the extrinsic, lumenal subunits of photosystem II (PSII). PSII is a light-driven water plastoquinone oxidoreductase, using light energy to abstract electrons from H(2)O, generating a proton gradient subsequently used for ATP formation. The extrinsic proteins stabilize the structure of photosystem II oxygen-evolving complex (OEC), the ion environment of oxygen evolution and protect the OEC against heat-induced inactivation. Low-potential cytochrome c that plays a role in the OEC of PSII. The chain is Photosystem II extrinsic protein V (psbV) from Aphanizomenon flos-aquae.